A 2225-amino-acid polypeptide reads, in one-letter code: Nonribisomal peptide synthetase notE' (2225 aa).

A disordered region spans residues 24 to 59 (TVRESLSSSPSPLPSLASPVSSGSEPPAFGETQPQS). Residues 28 to 49 (SLSSSPSPLPSLASPVSSGSEP) are compositionally biased toward low complexity. Residues 83–482 (QERCKEAPQS…GRRDGQLKIR (400 aa)) form an adenylation 1 region. The region spanning 614–690 (SPTTATELML…EQAQRATPMT (77 aa)) is the Carrier 1 domain. Position 651 is an O-(pantetheine 4'-phosphoryl)serine (Ser651). Residues 730–1142 (EDIYPCTPLQ…DLASPLDQDL (413 aa)) form a condensation 1 region. The interval 1164-1563 (AQAMQQPSRQ…GRRDTQVKVR (400 aa)) is adenylation 2. Positions 1699–1775 (PVSHGAELRL…DLARCTGEEQ (77 aa)) constitute a Carrier 2 domain. Ser1736 carries the O-(pantetheine 4'-phosphoryl)serine modification. Positions 1827-2138 (FAFHGEVSID…FILQHQNIDM (312 aa)) are condensation 2.

The protein belongs to the NRP synthetase family.

The catalysed reaction is L-proline + L-tryptophan + 2 ATP = brevianamide F + 2 AMP + 2 diphosphate + 2 H(+). The protein operates within alkaloid biosynthesis. Functionally, nonribisomal peptide synthetase; part of the gene cluster that mediates the biosynthesis of notoamide, a fungal indole alkaloid that belongs to a family of natural products containing a characteristic bicyclo[2.2.2]diazaoctane core. The first step of notoamide biosynthesis involves coupling of L-proline and L-tryptophan by the bimodular NRPS notE', to produce cyclo-L-tryptophan-L-proline called brevianamide F. The reverse prenyltransferase notF' then acts as a deoxybrevianamide E synthase and converts brevianamide F to deoxybrevianamide E via reverse prenylation at C-2 of the indole ring leading to the bicyclo[2.2.2]diazaoctane core. Deoxybrevianamide E is further hydroxylated at C-6 of the indole ring, likely catalyzed by the cytochrome P450 monooxygenase notG', to yield 6-hydroxy-deoxybrevianamide E. 6-hydroxy-deoxybrevianamide E is a specific substrate of the prenyltransferase notC' for normal prenylation at C-7 to produce 6-hydroxy-7-prenyl-deoxybrevianamide, also called notoamide S. As the proposed pivotal branching point in notoamide biosynthesis, notoamide S can be diverted to notoamide E through an oxidative pyran ring closure putatively catalyzed by either notH' cytochrome P450 monooxygenase or the notD' FAD-linked oxidoreductase. This step would be followed by an indole 2,3-epoxidation-initiated pinacol-like rearrangement catalyzed by the notB' FAD-dependent monooxygenase leading to the formation of notoamide C and notoamide D. On the other hand notoamide S is converted to notoamide T by notH' (or notD'), a bifunctional oxidase that also functions as the intramolecular Diels-Alderase responsible for generation of (-)-notoamide T. To generate antipodal (+)-notoaminide T, notH (or notD) in Aspergillus strain MF297-2 is expected to catalyze a Diels-Alder reaction leading to the opposite stereochemistry. The remaining oxidoreductase notD' (or notH') likely catalyzes the oxidative pyran ring formation to yield (-)-stephacidin A. The FAD-dependent monooxygenase notI' is highly similar to notB' and is predicted to catalyze a similar conversion from (-)-stephacidin A to (+)-notoamide B via the 2,3-epoxidation of (-)-stephacidin A followed by a pinacol-type rearrangement. Finally, it remains unclear which enzyme could be responsible for the final hydroxylation steps leading to notoamide A and sclerotiamide. The polypeptide is Nonribisomal peptide synthetase notE' (Aspergillus versicolor).